A 166-amino-acid polypeptide reads, in one-letter code: Endoribonuclease YbeY (166 aa).

3 residues coordinate Zn(2+): His132, His136, and His142.

Belongs to the endoribonuclease YbeY family. It depends on Zn(2+) as a cofactor.

It localises to the cytoplasm. Single strand-specific metallo-endoribonuclease involved in late-stage 70S ribosome quality control and in maturation of the 3' terminus of the 16S rRNA. The polypeptide is Endoribonuclease YbeY (Clostridium botulinum (strain ATCC 19397 / Type A)).